A 426-amino-acid polypeptide reads, in one-letter code: MEKKAFFQQLDERTDIRYTDSGLKIFRLKFPRAHLRLCNVKIDFGSRDVCIRAESGDTLLPYGTAHFLEHLLFWHNGRNLYSDFFAHGALLNAFTTYTDTNFMFTSLPDRLRQTIPILLDALWNHSFDKKIVAQEKAVITSEIQTAHLNHQLSYHYQLISMLSPSSPAAVFPAGRIEDIEALDISDLQKAYKAAYQAHRMTLFLIGGSENTETLLPPHLQLEKRPDYHAERKIIPACPPVLSQKMMLGDEERMEDTWTGLQIGALPGQNDLLSIKLYWDIAARILFQLDSPFFQEIQQTYRLEIDRLSAETYIYEDGGFLILHSQGTHSSAYIDVASYYVTQKKEQVAAWLQYGKDSLTDAIIYDSDYVRKCFEWAAECDRCDCSFLDMYHIIQDMDAQVFLSLIDAMASSNKAIIHVSQKEAIRQ.

A Zn(2+)-binding site is contributed by histidine 66. The active-site Proton acceptor is glutamate 69. The Zn(2+) site is built by histidine 70 and glutamate 142.

This sequence belongs to the peptidase M16 family. Zn(2+) is required as a cofactor.

Its function is as follows. Required for production of the bacteriocin subtilosin. Could catalyze some step in the processing of presubtilosin. The polypeptide is Putative zinc protease AlbF (albF) (Bacillus subtilis (strain 168)).